The following is a 517-amino-acid chain: Nicotine N-demethylase CYP82E4 (517 aa).

Residues 2–22 (LSPIEAIVGLVTFTFLFYFLW) form a helical membrane-spanning segment. A Glycyl lysine isopeptide (Lys-Gly) (interchain with G-Cter in ubiquitin) cross-link involves residue lysine 254. Residue cysteine 457 coordinates heme.

This sequence belongs to the cytochrome P450 family. CYP82E2 subfamily. Heme is required as a cofactor. As to expression, expressed in leaves.

It is found in the membrane. It catalyses the reaction (S)-nicotine + reduced [NADPH--hemoprotein reductase] + O2 = (S)-nornicotine + formaldehyde + oxidized [NADPH--hemoprotein reductase] + H2O + H(+). The protein operates within alkaloid biosynthesis; nicotine biosynthesis. Functionally, involved in the biosynthesis of pyridine alkaloid natural products, leading mainly to the production of anabasine, anatabine, nicotine and nornicotine, effective deterrents against herbivores with antiparasitic and pesticide properties (neurotoxins); nornicotine serves as the precursor in the synthesis of the carcinogen compound N'-nitrosonornicotine (NNN). Catalyzes the demethylation of nicotine to form nornicotine. This chain is Nicotine N-demethylase CYP82E4, found in Nicotiana tomentosiformis (Tobacco).